The sequence spans 405 residues: Cysteine desulfurase IscS (405 aa).

Pyridoxal 5'-phosphate-binding positions include 75 to 76 (AT), N156, Q184, and 204 to 206 (SAH). K207 is modified (N6-(pyridoxal phosphate)lysine). T244 is a pyridoxal 5'-phosphate binding site. The Cysteine persulfide intermediate role is filled by C329. C329 provides a ligand contact to [2Fe-2S] cluster.

This sequence belongs to the class-V pyridoxal-phosphate-dependent aminotransferase family. NifS/IscS subfamily. As to quaternary structure, homodimer. Forms a heterotetramer with IscU, interacts with other sulfur acceptors. Pyridoxal 5'-phosphate serves as cofactor.

Its subcellular location is the cytoplasm. The catalysed reaction is (sulfur carrier)-H + L-cysteine = (sulfur carrier)-SH + L-alanine. It participates in cofactor biosynthesis; iron-sulfur cluster biosynthesis. Master enzyme that delivers sulfur to a number of partners involved in Fe-S cluster assembly, tRNA modification or cofactor biosynthesis. Catalyzes the removal of elemental sulfur atoms from cysteine to produce alanine. Functions as a sulfur delivery protein for Fe-S cluster synthesis onto IscU, an Fe-S scaffold assembly protein, as well as other S acceptor proteins. The polypeptide is Cysteine desulfurase IscS (Acinetobacter baumannii (strain AB307-0294)).